We begin with the raw amino-acid sequence, 157 residues long: Small ribosomal subunit protein uS7 (157 aa).

Belongs to the universal ribosomal protein uS7 family. Part of the 30S ribosomal subunit. Contacts proteins S9 and S11.

In terms of biological role, one of the primary rRNA binding proteins, it binds directly to 16S rRNA where it nucleates assembly of the head domain of the 30S subunit. Is located at the subunit interface close to the decoding center, probably blocks exit of the E-site tRNA. The protein is Small ribosomal subunit protein uS7 of Variovorax paradoxus (strain S110).